The following is a 243-amino-acid chain: 2-C-methyl-D-erythritol 4-phosphate cytidylyltransferase (243 aa).

The protein belongs to the IspD/TarI cytidylyltransferase family. IspD subfamily.

The catalysed reaction is 2-C-methyl-D-erythritol 4-phosphate + CTP + H(+) = 4-CDP-2-C-methyl-D-erythritol + diphosphate. It participates in isoprenoid biosynthesis; isopentenyl diphosphate biosynthesis via DXP pathway; isopentenyl diphosphate from 1-deoxy-D-xylulose 5-phosphate: step 2/6. In terms of biological role, catalyzes the formation of 4-diphosphocytidyl-2-C-methyl-D-erythritol from CTP and 2-C-methyl-D-erythritol 4-phosphate (MEP). The polypeptide is 2-C-methyl-D-erythritol 4-phosphate cytidylyltransferase (Chlorobium phaeovibrioides (strain DSM 265 / 1930) (Prosthecochloris vibrioformis (strain DSM 265))).